Consider the following 186-residue polypeptide: ATP synthase subunit delta (186 aa).

The protein belongs to the ATPase delta chain family. As to quaternary structure, F-type ATPases have 2 components, F(1) - the catalytic core - and F(0) - the membrane proton channel. F(1) has five subunits: alpha(3), beta(3), gamma(1), delta(1), epsilon(1). F(0) has three main subunits: a(1), b(2) and c(10-14). The alpha and beta chains form an alternating ring which encloses part of the gamma chain. F(1) is attached to F(0) by a central stalk formed by the gamma and epsilon chains, while a peripheral stalk is formed by the delta and b chains.

Its subcellular location is the cell inner membrane. F(1)F(0) ATP synthase produces ATP from ADP in the presence of a proton or sodium gradient. F-type ATPases consist of two structural domains, F(1) containing the extramembraneous catalytic core and F(0) containing the membrane proton channel, linked together by a central stalk and a peripheral stalk. During catalysis, ATP synthesis in the catalytic domain of F(1) is coupled via a rotary mechanism of the central stalk subunits to proton translocation. In terms of biological role, this protein is part of the stalk that links CF(0) to CF(1). It either transmits conformational changes from CF(0) to CF(1) or is implicated in proton conduction. The protein is ATP synthase subunit delta of Azorhizobium caulinodans (strain ATCC 43989 / DSM 5975 / JCM 20966 / LMG 6465 / NBRC 14845 / NCIMB 13405 / ORS 571).